The sequence spans 323 residues: Cytochrome c biogenesis protein CcsA (323 aa).

8 consecutive transmembrane segments (helical) span residues 17-37 (VVSIVISIHLITLFVNQIVGF), 44-64 (GMIITFLCITGLLITRWFFSG), 68-88 (FSDLYESLIFLSWGFSIFYMV), 98-118 (LSTIIAPSVIFTQGFATSGLL), 143-163 (MILGYAALLCGSLLSVAILVI), 229-249 (IISLGFIFLTIGILSGAVWAN), 262-279 (ETWAFITWTIFAIYLHSR), and 291-311 (IVASIGFLIIWICYFGVNLLG).

It belongs to the CcmF/CycK/Ccl1/NrfE/CcsA family. In terms of assembly, may interact with Ccs1.

Its subcellular location is the plastid. The protein localises to the chloroplast thylakoid membrane. In terms of biological role, required during biogenesis of c-type cytochromes (cytochrome c6 and cytochrome f) at the step of heme attachment. This chain is Cytochrome c biogenesis protein CcsA, found in Lotus japonicus (Lotus corniculatus var. japonicus).